The primary structure comprises 695 residues: Elongation factor G (695 aa).

A tr-type G domain is found at 10 to 285 (DKTRNIGIMA…GVVDYLPSPL (276 aa)). Residues 19–26 (AHIDAGKT), 83–87 (DTPGH), and 137–140 (NKMD) each bind GTP.

This sequence belongs to the TRAFAC class translation factor GTPase superfamily. Classic translation factor GTPase family. EF-G/EF-2 subfamily.

It is found in the cytoplasm. Catalyzes the GTP-dependent ribosomal translocation step during translation elongation. During this step, the ribosome changes from the pre-translocational (PRE) to the post-translocational (POST) state as the newly formed A-site-bound peptidyl-tRNA and P-site-bound deacylated tRNA move to the P and E sites, respectively. Catalyzes the coordinated movement of the two tRNA molecules, the mRNA and conformational changes in the ribosome. This is Elongation factor G from Latilactobacillus sakei subsp. sakei (strain 23K) (Lactobacillus sakei subsp. sakei).